Reading from the N-terminus, the 262-residue chain is Global transcriptional regulator CodY (262 aa).

The GAF domain stretch occupies residues 1–159 (MAHLLEKTRK…SSTVVGIQLL (159 aa)). The H-T-H motif DNA-binding region spans 207-226 (ASVIADRIGITRSVIVNALR).

The protein belongs to the CodY family.

It is found in the cytoplasm. Its function is as follows. DNA-binding global transcriptional regulator which is involved in the adaptive response to starvation and acts by directly or indirectly controlling the expression of numerous genes in response to nutrient availability. During rapid exponential growth, CodY is highly active and represses genes whose products allow adaptation to nutrient depletion. This is Global transcriptional regulator CodY from Streptococcus gordonii (strain Challis / ATCC 35105 / BCRC 15272 / CH1 / DL1 / V288).